The chain runs to 354 residues: Chorismate synthase (354 aa).

Arg46 is a binding site for NADP(+). FMN contacts are provided by residues Arg123–Ser125, Asn233–Gly234, Gly273, Lys288–Ser292, and Arg314.

This sequence belongs to the chorismate synthase family. As to quaternary structure, homotetramer. Requires FMNH2 as cofactor.

The catalysed reaction is 5-O-(1-carboxyvinyl)-3-phosphoshikimate = chorismate + phosphate. It participates in metabolic intermediate biosynthesis; chorismate biosynthesis; chorismate from D-erythrose 4-phosphate and phosphoenolpyruvate: step 7/7. Its function is as follows. Catalyzes the anti-1,4-elimination of the C-3 phosphate and the C-6 proR hydrogen from 5-enolpyruvylshikimate-3-phosphate (EPSP) to yield chorismate, which is the branch point compound that serves as the starting substrate for the three terminal pathways of aromatic amino acid biosynthesis. This reaction introduces a second double bond into the aromatic ring system. This Campylobacter curvus (strain 525.92) protein is Chorismate synthase.